Here is a 372-residue protein sequence, read N- to C-terminus: Queuine tRNA-ribosyltransferase (372 aa).

The Proton acceptor role is filled by Asp89. Substrate-binding positions include 89 to 93 (DSGGF), Asp143, Gln185, and Gly212. Residues 243 to 249 (GVGKPED) are RNA binding. Catalysis depends on Asp262, which acts as the Nucleophile. The RNA binding; important for wobble base 34 recognition stretch occupies residues 267 to 271 (TRNAR). 4 residues coordinate Zn(2+): Cys300, Cys302, Cys305, and His331.

Belongs to the queuine tRNA-ribosyltransferase family. As to quaternary structure, homodimer. Within each dimer, one monomer is responsible for RNA recognition and catalysis, while the other monomer binds to the replacement base PreQ1. Zn(2+) serves as cofactor.

The enzyme catalyses 7-aminomethyl-7-carbaguanine + guanosine(34) in tRNA = 7-aminomethyl-7-carbaguanosine(34) in tRNA + guanine. It participates in tRNA modification; tRNA-queuosine biosynthesis. Its function is as follows. Catalyzes the base-exchange of a guanine (G) residue with the queuine precursor 7-aminomethyl-7-deazaguanine (PreQ1) at position 34 (anticodon wobble position) in tRNAs with GU(N) anticodons (tRNA-Asp, -Asn, -His and -Tyr). Catalysis occurs through a double-displacement mechanism. The nucleophile active site attacks the C1' of nucleotide 34 to detach the guanine base from the RNA, forming a covalent enzyme-RNA intermediate. The proton acceptor active site deprotonates the incoming PreQ1, allowing a nucleophilic attack on the C1' of the ribose to form the product. After dissociation, two additional enzymatic reactions on the tRNA convert PreQ1 to queuine (Q), resulting in the hypermodified nucleoside queuosine (7-(((4,5-cis-dihydroxy-2-cyclopenten-1-yl)amino)methyl)-7-deazaguanosine). The polypeptide is Queuine tRNA-ribosyltransferase (Chromohalobacter salexigens (strain ATCC BAA-138 / DSM 3043 / CIP 106854 / NCIMB 13768 / 1H11)).